The following is a 787-amino-acid chain: MYKSLFLCLKIFAVLILIGCSVTAYIIYHYSHDLPDYSQLARYYPPSVTRIYSRDGKLIEEYAFERRVFVPINNVPSSLIESFIAAEDKNFYTHPGIDLLGIVRAAFLNISNYLHNRRMEGASTITQQVVKNFLLTNEVSLERKIKEVIISYMISRIFTKHQILELYLNQTFFGRGAYGVAAAAQNYFNKSVEELTIAESAFIAALPKAPSELNPDKNYSRVKARRDYVIERMFEDGYITRDTMKEAIGSPIVLRKRAKEETVTADYYAEQVREEVIRMLNSKEEFYRGGLTIITSLDAKMQQLAENSLRKGLREFDRKSGFRKPIANIPLDNWQEELKKLPTPSSLLEYKLAVVLDVSDNHAKIGLIDGSKAKIPIVEMQWARSNLKSVKTLLKKGDVIVVEPIKDCYALRQIPEVNGAIMVMNPHTGQVLASVGGYDFSTSKFDRVTQALRQPGSLSKTFVYLAALENGVKPNQIFNDGPIEIIQGPGMPSWCPKNYEGQFLGDMTMRTGFEKSRNLITVRVATAVGLTKIVDIIKRFGINNEPKKVYSMVLGSIETTLSRITNAYAIIANGGKKVEPHFVELIQDRNGKIIYRRDNRECFSCNIADSDLDTAILEIPKEDIYRVTDEASNYQITSFLTGAIDSGTGYAARKLGKIIAGKTGTSNDSKDTWFIGFTPKIVVGSYVGYDTPKELGKKATGSNVVLPIFIDFMNHAYKDEPSLPFKVPDSIKLIAVDRITGKMIPNGTVIEAFKVNNIQMLENDYMIDNHDIFDYVPGMLDQSQEIY.

Over M1–F6 the chain is Cytoplasmic. Residues L7–I27 traverse the membrane as a helical; Signal-anchor for type II membrane protein segment. Residues Y28 to Y787 lie on the Periplasmic side of the membrane. A transglycosylase region spans residues T49–S220. Residue E87 is the Proton donor; for transglycosylase activity of the active site. Residues D398–D711 are transpeptidase. S457 serves as the catalytic Acyl-ester intermediate; for transpeptidase activity.

This sequence in the N-terminal section; belongs to the glycosyltransferase 51 family. It in the C-terminal section; belongs to the transpeptidase family.

Its subcellular location is the cell inner membrane. The catalysed reaction is [GlcNAc-(1-&gt;4)-Mur2Ac(oyl-L-Ala-gamma-D-Glu-L-Lys-D-Ala-D-Ala)](n)-di-trans,octa-cis-undecaprenyl diphosphate + beta-D-GlcNAc-(1-&gt;4)-Mur2Ac(oyl-L-Ala-gamma-D-Glu-L-Lys-D-Ala-D-Ala)-di-trans,octa-cis-undecaprenyl diphosphate = [GlcNAc-(1-&gt;4)-Mur2Ac(oyl-L-Ala-gamma-D-Glu-L-Lys-D-Ala-D-Ala)](n+1)-di-trans,octa-cis-undecaprenyl diphosphate + di-trans,octa-cis-undecaprenyl diphosphate + H(+). It carries out the reaction Preferential cleavage: (Ac)2-L-Lys-D-Ala-|-D-Ala. Also transpeptidation of peptidyl-alanyl moieties that are N-acyl substituents of D-alanine.. Its pathway is cell wall biogenesis; peptidoglycan biosynthesis. Functionally, cell wall formation. Synthesis of cross-linked peptidoglycan from the lipid intermediates. The enzyme has a penicillin-insensitive transglycosylase N-terminal domain (formation of linear glycan strands) and a penicillin-sensitive transpeptidase C-terminal domain (cross-linking of the peptide subunits). In Rickettsia prowazekii (strain Madrid E), this protein is Penicillin-binding protein 1A (mrcA).